We begin with the raw amino-acid sequence, 274 residues long: Prothoracicostatic peptide (274 aa).

Residues 1–19 form the signal peptide; the sequence is MRWCLFALWVFGVATVVTA. Residues 20-67 constitute a propeptide that is removed on maturation; that stretch reads AEEPHHDAAPQTDNEVDLTEDDKRAWSSLHSGWAKRAWQDMSSAWGKR. A Tryptophan amide modification is found at W76. Residues 77 to 91 constitute a propeptide that is removed on maturation; it reads GKRGWQDLNSAWGKR. Tryptophan amide is present on W100. Residues 101–136 constitute a propeptide that is removed on maturation; the sequence is GKRGWQDLNSAWGKRDDDEAMEKKSWQDLNSVWGKR. The residue at position 145 (W145) is a Tryptophan amide. The propeptide occupies 146-148; the sequence is GKR. W157 is modified (tryptophan amide). A propeptide spanning residues 158–172 is cleaved from the precursor; sequence GKRGWNDISSVWGKR. A Tryptophan amide modification is found at W181. The propeptide occupies 182–274; that stretch reads GKRAWQDMSS…NEHSATTNEA (93 aa).

Its subcellular location is the secreted. Its function is as follows. Inhibits ecdysteroid biosynthesis in the prothoracic gland of fifth instar larvae, with maximum inhibition during the spinning stage. When administered to day 8 fifth instar larvae it produces a significant delay in the commencement spinning behavior. This Bombyx mori (Silk moth) protein is Prothoracicostatic peptide.